A 278-amino-acid chain; its full sequence is MSQEFVEDYSRTGSSDDEDSGAYDEWIPSFCSRFGHEYFCQVPTEFIEDDFNMTSLSQEVPHYRKALDLILDLEAMSDEEEDEDDVVEEDEVDQEMQSNDGHDEGKRRNKSPVVNKSIIEHAAEQLYGLIHARFILTKPGLQAMAEKFDHKEFGTCPRYYCNGMQLLPCGLSDTVGKHTVRLYCPSCQDLYLPQSSRFLCLEGAFWGTSFPGVFLKHFKELEEYVERKSKESYELKVFGFRINDEAVSGPRMKWLRQYPSTEEDWEEFAKCEFETPAV.

2 disordered regions span residues 1 to 22 (MSQEFVEDYSRTGSSDDEDSGA) and 78 to 111 (DEEEDEDDVVEEDEVDQEMQSNDGHDEGKRRNKS). At S2 the chain carries N-acetylserine. S2 carries the phosphoserine modification. Positions 78 to 94 (DEEEDEDDVVEEDEVDQ) are enriched in acidic residues.

It belongs to the casein kinase 2 subunit beta family. In terms of assembly, tetramer composed of an alpha subunit, an alpha' subunit, one beta subunit and one beta' subunit. Interacts with FACT subunits POB3 and SPT16. interacts with YTA7. Post-translationally, phosphorylated by alpha subunit.

Functionally, regulatory subunit of casein kinase II/CK2. As part of the kinase complex regulates the basal catalytic activity of the alpha subunit a constitutively active serine/threonine-protein kinase that phosphorylates a large number of substrates containing acidic residues C-terminal to the phosphorylated serine or threonine. This Saccharomyces cerevisiae (strain ATCC 204508 / S288c) (Baker's yeast) protein is Casein kinase II subunit beta (CKB1).